The chain runs to 1127 residues: MGVPALFRWLSKKYPKIVERVKEDTPKKIRGPDGEIVEEPIRYENPNPNGFEVDNLYLDMNGIVHPCTHPEGRPAPETEEEMMVEIFKYTERVVNMCRPRKVLMMAIDGVAPRAKMNQQRSRRFRAAQEAADKEEERREAIKLFEAMGHAVSEETANHKSWDTNAITPGTPFMDLLSISLKYWVSHKLTTDPGWKDLKIILSDSSVPGEGEHKIMDWIRRQRSYPTWDANTSHVIYGLDADLIMLSLATHEPHFRVLREDVFAQSSKGPHACKNCGKVGHIAANCKSDKKFKDPNVAEVAKTEDPKPFIFLDVACLREYLAVELVVPGMPFPFDLELAIDDWIFMIFFVGNDFLPHLPSLEIREGAIDVLLKIWRAELPRMGGYLTNHGKVNLDRAQVILEGLAKSEDEIFQKRKDDEERQEHSQKRRRIEEHKRQDEDKAREEDRNTLTLNGTEYVAVDNPAATARGGPLHPSLPSRPAFDLVPKEDAVKQPEDQDQKAKKAMAGSNSDIVKNRKAIRMANMSAAQALKAELEGGNDVNVDDKKAIAQEGKEEDEAVVTVERTEDEEKEQLTKEEARGTLEEQGEKEGVDEEVVPPAIQTDEDEGEAPVGDATVAENDESTTPEDDEDPTHVPRKRKRGDSDGDEDSNEEDDDDDDDDAPPNPEADQPIPKKKLKVNADGTVDYEDDVKLWEPGYRERYYEKKFGVKLSEREFIDKVTKSYMEGLCWVLEYYYQGVPAWDWFYPYHYAPFAQDFRDVGSMDIKFETSIPFKPFAQLLGVFPAASRIHLPEPLQTLMIDEDSPILDFYPPDFEIDMNGKKMAWQGVALLPFIDQNRLLTALKSKEELLSDDEKRRNSWGDNVMFIANENPLYDLFCDKLYGLRAKDPIPIDTKASYGITGSVLPDPNCVPASTFDTPIPSISECPDLNPNDSISVRYYFPRQAHPHRSILLRGYKPEPARLTESDKDWVRRGGQGGRRGHRHNGGGNGNVTGGPGMARGRYESGPPRTNGYQPPPPRSNYGGSSGYGYGAPAPLPSRPPVSSYGGGAGGYGYSNPYAAAPNPYAGGYGAPAPYAAGGYGQRPYVPPLPPPNPYSAPPPAYGRPPGGGYGYGAPPPRGGGYNPYPSRR.

Residues 121–147 (SRRFRAAQEAADKEEERREAIKLFEAM) adopt a coiled-coil conformation. A CCHC-type zinc finger spans residues 270-287 (HACKNCGKVGHIAANCKS). Composition is skewed to basic and acidic residues over residues 411-447 (FQKR…EDRN), 541-551 (VDDKKAIAQEG), and 570-588 (EQLT…GEKE). 4 disordered regions span residues 411-448 (FQKR…DRNT), 532-678 (ELEG…LKVN), 962-1033 (TESD…APAP), and 1069-1127 (APAP…PSRR). Residues 412–441 (QKRKDDEERQEHSQKRRRIEEHKRQDEDKA) adopt a coiled-coil conformation. Acidic residues-rich tracts occupy residues 617-629 (ENDE…DDED) and 643-660 (DGDE…DDDA). Positions 984–996 (GGGNGNVTGGPGM) are enriched in gly residues. Positions 1083–1101 (YVPPLPPPNPYSAPPPAYG) are enriched in pro residues.

This sequence belongs to the 5'-3' exonuclease family. XRN2/RAT1 subfamily. Interacts with RAI1; the interaction is direct, stabilizes RAT1 protein structure and may stimulate its exoribonuclease activity. The interaction also stimulates RAI1 pyrophosphohydrolase activity, probably by recruiting it to mRNA substrates.

It is found in the nucleus. Its function is as follows. Possesses 5'-&gt;3' exoribonuclease activity. Required for the processing of nuclear mRNA and rRNA precursors. May promote the termination of transcription by RNA polymerase II. Essential for vegetative cell growth and chromosome segregation. In Cryptococcus neoformans var. neoformans serotype D (strain JEC21 / ATCC MYA-565) (Filobasidiella neoformans), this protein is 5'-3' exoribonuclease 2 (RAT1).